The primary structure comprises 467 residues: Serine/threonine-protein phosphatase 2A 56 kDa regulatory subunit epsilon isoform (467 aa).

The tract at residues 1–39 (MSSAPTTPPSVDKVDGFSRKSVRKARQKRSQSSSQFRSQ) is disordered. N-acetylserine is present on Ser-2. Thr-7 carries the post-translational modification Phosphothreonine. Positions 20–29 (KSVRKARQKR) are enriched in basic residues. Ser-30, Ser-32, and Ser-34 each carry phosphoserine. Over residues 30-39 (SQSSSQFRSQ) the composition is skewed to low complexity.

The protein belongs to the phosphatase 2A regulatory subunit B56 family. In terms of assembly, PP2A consists of a common heterodimeric core enzyme, composed of a 36 kDa catalytic subunit (subunit C) and a 65 kDa constant regulatory subunit (PR65 or subunit A), that associates with a variety of regulatory subunits. Proteins that associate with the core dimer include three families of regulatory subunits B (the R2/B/PR55/B55, R3/B''/PR72/PR130/PR59 and R5/B'/B56 families), the 48 kDa variable regulatory subunit, viral proteins, and cell signaling molecules. Interacts with SGO1. Found in a complex with at least ARL2, PPP2CB; PPP2R1A, PPP2R2A, PPP2R5E and TBCD.

The protein localises to the cytoplasm. In terms of biological role, the B regulatory subunit might modulate substrate selectivity and catalytic activity, and might also direct the localization of the catalytic enzyme to a particular subcellular compartment. Interacts with cyclin G in vitro. This Mus musculus (Mouse) protein is Serine/threonine-protein phosphatase 2A 56 kDa regulatory subunit epsilon isoform (Ppp2r5e).